Consider the following 158-residue polypeptide: MQGRLSAWLVKHGLIHRSLGFDYQGIETLQIKPEDWHSIAVIFYVYGYNYLRSQCAYDVAPGGLLASVYHLTRIEDGVDQPEEVCIKVFASRRNPRIPSVFWVWKSVDFQERESYDMLGISYDNHPRLKRILMPESWIGWPLRKDYIAPNFYEIQDAH.

It belongs to the complex I 30 kDa subunit family. As to quaternary structure, NDH is composed of at least 16 different subunits, 5 of which are encoded in the nucleus.

The protein localises to the plastid. It localises to the chloroplast thylakoid membrane. The enzyme catalyses a plastoquinone + NADH + (n+1) H(+)(in) = a plastoquinol + NAD(+) + n H(+)(out). It carries out the reaction a plastoquinone + NADPH + (n+1) H(+)(in) = a plastoquinol + NADP(+) + n H(+)(out). Its function is as follows. NDH shuttles electrons from NAD(P)H:plastoquinone, via FMN and iron-sulfur (Fe-S) centers, to quinones in the photosynthetic chain and possibly in a chloroplast respiratory chain. The immediate electron acceptor for the enzyme in this species is believed to be plastoquinone. Couples the redox reaction to proton translocation, and thus conserves the redox energy in a proton gradient. This chain is NAD(P)H-quinone oxidoreductase subunit J, chloroplastic, found in Nicotiana tabacum (Common tobacco).